We begin with the raw amino-acid sequence, 239 residues long: Pyrroloquinoline-quinone synthase (239 aa).

It belongs to the PqqC family.

The catalysed reaction is 6-(2-amino-2-carboxyethyl)-7,8-dioxo-1,2,3,4,7,8-hexahydroquinoline-2,4-dicarboxylate + 3 O2 = pyrroloquinoline quinone + 2 H2O2 + 2 H2O + H(+). Its pathway is cofactor biosynthesis; pyrroloquinoline quinone biosynthesis. In terms of biological role, ring cyclization and eight-electron oxidation of 3a-(2-amino-2-carboxyethyl)-4,5-dioxo-4,5,6,7,8,9-hexahydroquinoline-7,9-dicarboxylic-acid to PQQ. This Gluconobacter oxydans (strain 621H) (Gluconobacter suboxydans) protein is Pyrroloquinoline-quinone synthase.